A 178-amino-acid chain; its full sequence is tRNA (cytidine(56)-2'-O)-methyltransferase (178 aa).

S-adenosyl-L-methionine is bound at residue leucine 88.

This sequence belongs to the aTrm56 family. In terms of assembly, homodimer.

It is found in the cytoplasm. It carries out the reaction cytidine(56) in tRNA + S-adenosyl-L-methionine = 2'-O-methylcytidine(56) in tRNA + S-adenosyl-L-homocysteine + H(+). Functionally, specifically catalyzes the AdoMet-dependent 2'-O-ribose methylation of cytidine at position 56 in tRNAs. The protein is tRNA (cytidine(56)-2'-O)-methyltransferase of Methanopyrus kandleri (strain AV19 / DSM 6324 / JCM 9639 / NBRC 100938).